A 369-amino-acid chain; its full sequence is 3-dehydroquinate synthase (369 aa).

NAD(+)-binding positions include 75–80, 109–113, 133–134, lysine 146, lysine 155, and 173–176; these read DGEEHK, GVIGD, TT, and TLKT. The Zn(2+) site is built by glutamate 188, histidine 251, and histidine 268.

It belongs to the sugar phosphate cyclases superfamily. Dehydroquinate synthase family. It depends on Co(2+) as a cofactor. Zn(2+) serves as cofactor. NAD(+) is required as a cofactor.

The protein resides in the cytoplasm. It carries out the reaction 7-phospho-2-dehydro-3-deoxy-D-arabino-heptonate = 3-dehydroquinate + phosphate. It participates in metabolic intermediate biosynthesis; chorismate biosynthesis; chorismate from D-erythrose 4-phosphate and phosphoenolpyruvate: step 2/7. Functionally, catalyzes the conversion of 3-deoxy-D-arabino-heptulosonate 7-phosphate (DAHP) to dehydroquinate (DHQ). The polypeptide is 3-dehydroquinate synthase (Legionella pneumophila (strain Lens)).